A 734-amino-acid polypeptide reads, in one-letter code: Photosystem I P700 chlorophyll a apoprotein A2 (734 aa).

8 helical membrane-spanning segments follow: residues 46–69 (IFAS…FHVA), 135–158 (LYTG…LHLQ), 175–199 (LNHH…HVAI), 273–291 (IAHH…GHMY), 330–353 (IHFQ…QHMY), 369–395 (AALY…IFFI), 417–439 (AIIS…LYVH), and 517–535 (FLVH…LILV). [4Fe-4S] cluster is bound by residues C559 and C568. Transmembrane regions (helical) follow at residues 575-596 (AFYL…YWHW) and 643-665 (LSVW…MFLI). H654, M662, and Y670 together coordinate chlorophyll a. Residue W671 coordinates phylloquinone. Residues 707-727 (LVGLAHFSVGYIFTYAAFLIA) form a helical membrane-spanning segment.

It belongs to the PsaA/PsaB family. In terms of assembly, the PsaA/B heterodimer binds the P700 chlorophyll special pair and subsequent electron acceptors. PSI consists of a core antenna complex that captures photons, and an electron transfer chain that converts photonic excitation into a charge separation. The eukaryotic PSI reaction center is composed of at least 11 subunits. Requires P700 is a chlorophyll a/chlorophyll a' dimer, A0 is one or more chlorophyll a, A1 is one or both phylloquinones and FX is a shared 4Fe-4S iron-sulfur center. as cofactor.

The protein localises to the plastid. The protein resides in the chloroplast thylakoid membrane. The enzyme catalyses reduced [plastocyanin] + hnu + oxidized [2Fe-2S]-[ferredoxin] = oxidized [plastocyanin] + reduced [2Fe-2S]-[ferredoxin]. PsaA and PsaB bind P700, the primary electron donor of photosystem I (PSI), as well as the electron acceptors A0, A1 and FX. PSI is a plastocyanin-ferredoxin oxidoreductase, converting photonic excitation into a charge separation, which transfers an electron from the donor P700 chlorophyll pair to the spectroscopically characterized acceptors A0, A1, FX, FA and FB in turn. Oxidized P700 is reduced on the lumenal side of the thylakoid membrane by plastocyanin. The protein is Photosystem I P700 chlorophyll a apoprotein A2 of Saccharum hybrid (Sugarcane).